Here is a 359-residue protein sequence, read N- to C-terminus: Glycerol-3-phosphate dehydrogenase [NAD(P)+] (359 aa).

Residues Thr11, Trp12, Arg32, and Lys107 each contribute to the NADPH site. Positions 107 and 138 each coordinate sn-glycerol 3-phosphate. Ala142 contacts NADPH. Sn-glycerol 3-phosphate contacts are provided by Lys193, Asp246, Ser256, Arg257, and Asn258. Lys193 serves as the catalytic Proton acceptor. Residue Arg257 coordinates NADPH. The NADPH site is built by Val281 and Glu283.

It belongs to the NAD-dependent glycerol-3-phosphate dehydrogenase family.

It localises to the cytoplasm. The enzyme catalyses sn-glycerol 3-phosphate + NAD(+) = dihydroxyacetone phosphate + NADH + H(+). It catalyses the reaction sn-glycerol 3-phosphate + NADP(+) = dihydroxyacetone phosphate + NADPH + H(+). It participates in membrane lipid metabolism; glycerophospholipid metabolism. Catalyzes the reduction of the glycolytic intermediate dihydroxyacetone phosphate (DHAP) to sn-glycerol 3-phosphate (G3P), the key precursor for phospholipid synthesis. This chain is Glycerol-3-phosphate dehydrogenase [NAD(P)+], found in Dehalococcoides mccartyi (strain ATCC BAA-2100 / JCM 16839 / KCTC 5957 / BAV1).